The chain runs to 124 residues: Ribonuclease P protein component (124 aa).

Belongs to the RnpA family. Consists of a catalytic RNA component (M1 or rnpB) and a protein subunit.

The enzyme catalyses Endonucleolytic cleavage of RNA, removing 5'-extranucleotides from tRNA precursor.. Its function is as follows. RNaseP catalyzes the removal of the 5'-leader sequence from pre-tRNA to produce the mature 5'-terminus. It can also cleave other RNA substrates such as 4.5S RNA. The protein component plays an auxiliary but essential role in vivo by binding to the 5'-leader sequence and broadening the substrate specificity of the ribozyme. This chain is Ribonuclease P protein component, found in Synechocystis sp. (strain ATCC 27184 / PCC 6803 / Kazusa).